The primary structure comprises 223 residues: Cytidine deaminase 3 (223 aa).

CMP/dCMP-type deaminase domains lie at 21 to 154 and 184 to 223; these read TEPM…FSPD and SDCS…WYRG. Residue 62–64 participates in substrate binding; the sequence is NVE. Residue histidine 75 coordinates Zn(2+). Glutamate 77 functions as the Proton donor in the catalytic mechanism. Residues cysteine 110 and cysteine 113 each coordinate Zn(2+).

Belongs to the cytidine and deoxycytidylate deaminase family. Homodimer. The cofactor is Zn(2+).

It carries out the reaction cytidine + H2O + H(+) = uridine + NH4(+). The enzyme catalyses 2'-deoxycytidine + H2O + H(+) = 2'-deoxyuridine + NH4(+). Its function is as follows. This enzyme scavenges exogenous and endogenous cytidine and 2'-deoxycytidine for UMP synthesis. The chain is Cytidine deaminase 3 (CDA3) from Arabidopsis thaliana (Mouse-ear cress).